An 894-amino-acid chain; its full sequence is MILLAVLFLCFFSSYSASVKGHTTGLSLNNERLYKLTYSTEVFLDGGKGKPQDSVGYKISSDVDVVLLWRNPDGDDDQVIQVTITAVNVENAGQQRGEKSIFQGKSTPKIIGKDNLEALQRPMLLHLVRGKVKEFYSYENEPVGIENLKRGLASLFQMQLSSGTTNEVDISGDCKVTYQAQQDKVVKIKALDTCKIERSGFTTANQVLGVSSKATSVTTYKIEDSFVTAVLAEETRAFALNFQQTIAGKIVSKQKLELKTTEAGPRMIPGKQVAGVIKAVDSKYKAIPIVGQVLERVCKGCPSLAEHWKSIRKNLEPENLSKAEAVQSFLAFIQHLRTSRREEILQILKAEKKEVLPQLVDAVTSAQTPDSLEAILDFLDFKSDSSIILQERFLYACGFATHPDEELLRALLSKFKGSFASNDIRESVMIIIGALVRKLCQNEGCKLKAVVEAKKLILGGLEKPEKKEDTTMYLLALKNALLPEGIPLLLKYAEAGEGPVSHLATTVLQRYDVSFITDEVKKTLNRIYHQNRKVHEKTVRTTAAAVILKNPSYMDVKNILLSIGELPKEMNKYMLTVVQDILHFEMPASKMIRRVLKEMAVHNYDRFSKSGSSSAYTGYVERSPRAASTYSLDILYSGSGILRRSNLNIFQYIGKAELHGSQVVIEAQGLEGLIAATPDEGEENLDSYAGMSAILFDVQLRPVTFFNGYSDLMSKMLSASGDPVSVVKGLILLIDHSQDIQLQSGLKANMEIQGGLAIDISGSMEFSLWYRESKTRVKNRVAVVITSDVTVDASFVKAGVESRAETEAGLEFISTVQFSQYPFLVCMQMDKAEAPLRQFETKYERLSTGRGYVSRRRKESLVAGCELPLHQENSEMCNVVFPPQPESDNSGGWF.

Residues 1–21 (MILLAVLFLCFFSSYSASVKG) form the signal peptide. Residues 28-658 (LNNERLYKLT…IFQYIGKAEL (631 aa)) enclose the Vitellogenin domain. C174 and C194 are oxidised to a cystine.

In terms of assembly, interacts with PRAP1. Heterodimer; heterodimerizes with the protein disulfide isomerase (P4HB/PDI). Interacts with APOB. As to quaternary structure, heterodimer; heterodimerizes with the protein disulfide isomerase (P4HB/PDI). Post-translationally, cleaved by signal peptidase between residues Gln-33 and Asn-34. In terms of tissue distribution, mainly expressed in the intestine and the liver, and at lower levels in white and brown fat cells. Expressed in heart. As to expression, ubiquitous, and is the major isoform in hematopoietic cells and adipocytes.

It localises to the endoplasmic reticulum. The protein resides in the golgi apparatus. The enzyme catalyses a 1,2-diacyl-sn-glycero-3-phosphocholine(in) = a 1,2-diacyl-sn-glycero-3-phosphocholine(out). It catalyses the reaction a 1,2-diacyl-sn-glycero-3-phosphoethanolamine(in) = a 1,2-diacyl-sn-glycero-3-phosphoethanolamine(out). The catalysed reaction is a cholesterol ester(in) = a cholesterol ester(out). It carries out the reaction a triacyl-sn-glycerol(in) = a triacyl-sn-glycerol(out). Catalyzes the transport of triglyceride, cholesteryl ester, and phospholipid between phospholipid surfaces. Required for the assembly and secretion of plasma lipoproteins that contain apolipoprotein B. May be involved in regulating cholesteryl ester biosynthesis in cells that produce lipoproteins. Functionally, critical for the development of natural killer T (NKT) cells. Required for the assembly and secretion of plasma lipoproteins that contain apolipoprotein B. This is Microsomal triglyceride transfer protein large subunit (Mttp) from Mus musculus (Mouse).